A 247-amino-acid chain; its full sequence is UPF0309 protein Teth39_1980 (247 aa).

One can recognise an SIS domain in the interval 31-213 (IANSLLKEED…EAEIVFIMIK (183 aa)).

This sequence belongs to the UPF0309 family.

The polypeptide is UPF0309 protein Teth39_1980 (Thermoanaerobacter pseudethanolicus (strain ATCC 33223 / 39E) (Clostridium thermohydrosulfuricum)).